A 1080-amino-acid polypeptide reads, in one-letter code: MMIIEEYTPVPNTAFDFKIPDLIEMQLSSFRIFLKKGLIEELKDFSVISNSKKNLELRFFPEKYKLKRPKYNERTSIRRASTYTCQLYVPAKLTNKRTGEIQEQDVFLGEIPLMTGRGSFIINGSSRVIVNQIVRSPGIYYKREIDKKGRKTHSATIISNRGAWLRIETDKNGLIWARIGKIRKVSIMIVFKAMGLTKNEIFDALKYPQFLKKTIQETDPYLENDIQHDDDFENESTSTLLSTREILESRFFQSKYYDLGKVGRYKINKKLQLNIPENIRVLTVQDILAAVDYLINLEFNIGTLDDIDHLKNRRVRSVGELIQNQVRVGLGRLERMIYKRMGESSPDSLTLTSLVNPKPLVGAIREFFGSSQLSQFMDQTNPLSEITHKRRLSCLGPGGLSRERAGLAVRDIHPSHYGRICPIETPEGPNAGLIGSLATHSRVNEYGFLESPFYITKNRKVIKSELPIYLAPDQEDQFKVAPGDLLLSCYSSIENNYVPVRYKQEFTTSKAEEVDYVGISPTQAISIATSLIPFLEHDDANRALMGSNMQRQAVPLLKPNRPIVGTGFEEQVALDSGTVVICRHKGIVISVDSKTILVRSLRMNAKGIQHSHIDRYYLQKYNRSNQDTCINQKPVVSQGEWVQKGDILADGSATVNGELTLGQNILVAYMPWEGYNFEDAILISEKLVYEDIYTSIHIEKYEVDARKTKLGPEKITREIPNVNDHLLRNLDDNGIVIPGARVESGDILVGKVTPKEDLDQHPEGKLLRAIFGEKARDVRDSSLRVPNGVSGTVVNVRRLTGKELPSGVIMMVHVSISQKRKIQVGDKMAGRHGNKGIISKILPRQDMPYLQDGTPVDMVLNPLGVPSRMNVGQVFECLLGLAGEYLSENYKLMPFDEMYGKETSRGLVYSKLYEARQKTGYPWLFNIQSPGKSKLFDGRTGESFDQPVTIGKAYMLKLVHLVDDKIHARSTGPYSLVTQQPLGGRAKHGGQRLGEMEVWALEGFGAAYTLQELLTIKSDDMKGRNDALNAIIKGRPIPKPGTPESFKVLIRELQSLCLDIGVYKVHKSNKNQEIDLMQNF.

The protein belongs to the RNA polymerase beta chain family. In terms of assembly, in plastids the minimal PEP RNA polymerase catalytic core is composed of four subunits: alpha, beta, beta', and beta''. When a (nuclear-encoded) sigma factor is associated with the core the holoenzyme is formed, which can initiate transcription.

Its subcellular location is the plastid. It localises to the chloroplast. It catalyses the reaction RNA(n) + a ribonucleoside 5'-triphosphate = RNA(n+1) + diphosphate. In terms of biological role, DNA-dependent RNA polymerase catalyzes the transcription of DNA into RNA using the four ribonucleoside triphosphates as substrates. The sequence is that of DNA-directed RNA polymerase subunit beta from Mesostigma viride (Green alga).